Reading from the N-terminus, the 158-residue chain is Small ribosomal subunit protein uS9 (158 aa).

Residues 1–10 are compositionally biased toward polar residues; it reads MSDTMQSLDQ. The interval 1–35 is disordered; sequence MSDTMQSLDQLSALKTAAPDAPKREKKVDKQGRAY. Residues 21–32 are compositionally biased toward basic and acidic residues; it reads APKREKKVDKQG.

It belongs to the universal ribosomal protein uS9 family.

This Afipia carboxidovorans (strain ATCC 49405 / DSM 1227 / KCTC 32145 / OM5) (Oligotropha carboxidovorans) protein is Small ribosomal subunit protein uS9.